The following is a 91-amino-acid chain: LYR motif-containing protein 4 (91 aa).

Pantetheine 4'-phosphate contacts are provided by Arg6 and Lys44. Lys47 carries the post-translational modification N6-succinyllysine.

This sequence belongs to the complex I LYR family. In terms of assembly, homodimer. Component of the mitochondrial core iron-sulfur cluster (ISC) complex composed of NFS1, LYRM4, NDUFAB1, ISCU, FXN, and FDX2; this complex is a heterohexamer containing two copies of each monomer. Component of the cyteine desulfurase complex composed of NFS1, LYRM4 and NDUFAB1; this complex contributes to the stability and cysteine desulfurase activity of NFS1. Interacts with FXN; this interaction is nickel-dependent. Interacts with the cytoplasmic form of NFS1; the complex increases the stability of NFS1. Forms a complex with the cytoplasmic form of NFS1; this complex increases the stability and cysteine desulfurase activity of NFS1. Interacts with NFS1. Component of a complex composed of FXN, NFS1, LYRM4 and ISCU.

The protein localises to the mitochondrion. It localises to the nucleus. The protein operates within cofactor biosynthesis; iron-sulfur cluster biosynthesis. Functionally, stabilizing factor, of the core iron-sulfur cluster (ISC) assembly complex, that regulates, in association with NDUFAB1, the stability and the cysteine desulfurase activity of NFS1 and participates in the [2Fe-2S] clusters assembly on the scaffolding protein ISCU. The core iron-sulfur cluster (ISC) assembly complex is involved in the de novo synthesis of a [2Fe-2S] cluster, the first step of the mitochondrial iron-sulfur protein biogenesis. This process is initiated by the cysteine desulfurase complex (NFS1:LYRM4:NDUFAB1) that produces persulfide which is delivered on the scaffold protein ISCU in a FXN-dependent manner. Then this complex is stabilized by FDX2 which provides reducing equivalents to accomplish the [2Fe-2S] cluster assembly. Finally, the [2Fe-2S] cluster is transferred from ISCU to chaperone proteins, including HSCB, HSPA9 and GLRX5. May also participates in the iron-sulfur protein biogenesis in the cytoplasm through its interaction with the cytoplasmic form of NFS1. This chain is LYR motif-containing protein 4, found in Mus musculus (Mouse).